We begin with the raw amino-acid sequence, 970 residues long: Translation initiation factor IF-2 (970 aa).

2 disordered regions span residues 54–270 and 328–348; these read KILA…TATQ and DKRRGRTPGRPMSEEQAKSLS. A compositionally biased stretch (low complexity) spans 87–96; sequence QEAQPVEAQP. Polar residues predominate over residues 98–112; sequence YEEQPSYEEQPSYEE. Positions 121 to 149 are enriched in low complexity; it reads EVAAEAAPEPVEEPASSPEGGAPAGGAEP. 2 stretches are compositionally biased toward pro residues: residues 150-160 and 168-182; these read QPAPEAPPPSA and PSAPPSPAVRPPAPS. The segment covering 183–253 has biased composition (low complexity); that stretch reads VPAGAQPPGA…PHGPGAQPGQ (71 aa). The tr-type G domain maps to 469-638; that stretch reads IRPPVVTVMG…ALQSEVLELK (170 aa). Residues 478–485 are G1; that stretch reads GHVDHGKT. Position 478-485 (478-485) interacts with GTP; sequence GHVDHGKT. Residues 503–507 form a G2 region; that stretch reads GITQH. The interval 524–527 is G3; sequence DTPG. Residues 524-528 and 578-581 each bind GTP; these read DTPGH and NKID. The interval 578–581 is G4; the sequence is NKID. The G5 stretch occupies residues 614 to 616; the sequence is SAR.

Belongs to the TRAFAC class translation factor GTPase superfamily. Classic translation factor GTPase family. IF-2 subfamily.

It localises to the cytoplasm. Functionally, one of the essential components for the initiation of protein synthesis. Protects formylmethionyl-tRNA from spontaneous hydrolysis and promotes its binding to the 30S ribosomal subunits. Also involved in the hydrolysis of GTP during the formation of the 70S ribosomal complex. In Anaeromyxobacter sp. (strain Fw109-5), this protein is Translation initiation factor IF-2.